Reading from the N-terminus, the 176-residue chain is MMDWYAIQTYSGSEQSVKKAIENLANDHNIRDRIQEIIVPTEDIIEVSKKSKTKVTERSLYPGYVFIKVDLDTVLWHKIQSLPRVSRFIGENKKPTPLSEADIGHILEKMNNRAAPKPKIFFEQGEVVRVVEGPFANFTATVEEYDVEHRKLKLNVSIFGRNTPIEILHSQVEKII.

The KOW domain maps to 125-149 (GEVVRVVEGPFANFTATVEEYDVEH).

It belongs to the NusG family.

In terms of biological role, participates in transcription elongation, termination and antitermination. The chain is Transcription termination/antitermination protein NusG from Helicobacter pylori (strain ATCC 700392 / 26695) (Campylobacter pylori).